The sequence spans 266 residues: Ribosomal RNA small subunit methyltransferase A (266 aa).

Positions 10, 12, 37, 58, 82, and 105 each coordinate S-adenosyl-L-methionine.

This sequence belongs to the class I-like SAM-binding methyltransferase superfamily. rRNA adenine N(6)-methyltransferase family. RsmA subfamily.

It is found in the cytoplasm. The enzyme catalyses adenosine(1518)/adenosine(1519) in 16S rRNA + 4 S-adenosyl-L-methionine = N(6)-dimethyladenosine(1518)/N(6)-dimethyladenosine(1519) in 16S rRNA + 4 S-adenosyl-L-homocysteine + 4 H(+). Functionally, specifically dimethylates two adjacent adenosines (A1518 and A1519) in the loop of a conserved hairpin near the 3'-end of 16S rRNA in the 30S particle. May play a critical role in biogenesis of 30S subunits. This Mycoplasma capricolum subsp. capricolum (strain California kid / ATCC 27343 / NCTC 10154) protein is Ribosomal RNA small subunit methyltransferase A.